A 174-amino-acid chain; its full sequence is Crossover junction endodeoxyribonuclease RuvC (174 aa).

Active-site residues include D8, E68, and D140. Mg(2+) contacts are provided by D8, E68, and D140.

The protein belongs to the RuvC family. In terms of assembly, homodimer which binds Holliday junction (HJ) DNA. The HJ becomes 2-fold symmetrical on binding to RuvC with unstacked arms; it has a different conformation from HJ DNA in complex with RuvA. In the full resolvosome a probable DNA-RuvA(4)-RuvB(12)-RuvC(2) complex forms which resolves the HJ. The cofactor is Mg(2+).

The protein localises to the cytoplasm. The catalysed reaction is Endonucleolytic cleavage at a junction such as a reciprocal single-stranded crossover between two homologous DNA duplexes (Holliday junction).. In terms of biological role, the RuvA-RuvB-RuvC complex processes Holliday junction (HJ) DNA during genetic recombination and DNA repair. Endonuclease that resolves HJ intermediates. Cleaves cruciform DNA by making single-stranded nicks across the HJ at symmetrical positions within the homologous arms, yielding a 5'-phosphate and a 3'-hydroxyl group; requires a central core of homology in the junction. The consensus cleavage sequence is 5'-(A/T)TT(C/G)-3'. Cleavage occurs on the 3'-side of the TT dinucleotide at the point of strand exchange. HJ branch migration catalyzed by RuvA-RuvB allows RuvC to scan DNA until it finds its consensus sequence, where it cleaves and resolves the cruciform DNA. The protein is Crossover junction endodeoxyribonuclease RuvC of Legionella pneumophila subsp. pneumophila (strain Philadelphia 1 / ATCC 33152 / DSM 7513).